Here is a 376-residue protein sequence, read N- to C-terminus: C2H2 type master regulator of conidiophore development brlA (376 aa).

Low complexity predominate over residues 20 to 29 (TSFSSASSSA). Disordered stretches follow at residues 20-47 (TSFS…ELSL), 197-229 (HHHH…ASPN), and 241-267 (EAQR…PESG). A compositionally biased stretch (polar residues) spans 34–44 (TPSSRRSTPNE). Residues 197–209 (HHHHHNHHQHHHA) show a composition bias toward basic residues. The span at 219–229 (QLHSNTGASPN) shows a compositional bias: polar residues. A compositionally biased stretch (basic and acidic residues) spans 241–256 (EAQRKTSELQRAQIRE). The segment at 277–301 (CKCDYPGCNKAFRRNEHLKRHKQTF) adopts a C2H2-type 1; degenerate zinc-finger fold. Residues 309-332 (FSCEFCGKDQFNRQDNLNNHRKLH) form a C2H2-type 2 zinc finger. The segment at 351–376 (IIEHEERSRKRRAPPKSKAEKRDYDF) is disordered. Positions 367 to 376 (SKAEKRDYDF) are enriched in basic and acidic residues.

It localises to the nucleus. Its function is as follows. BrlA, abaA and wetA are pivotal regulators of conidiophore development and conidium maturation. They act individually and together to regulate their own expression and that of numerous other sporulation-specific genes. Binds promoters of target genes at brlA response elements (BREs) containing the conserved sequence 5'-(C/A)(A/G)AGGG(G/A)-3'. The polypeptide is C2H2 type master regulator of conidiophore development brlA (Hapsidospora chrysogena (Acremonium chrysogenum)).